The following is a 449-amino-acid chain: Deoxyguanosinetriphosphate triphosphohydrolase-like protein (449 aa).

The interval M1–R27 is disordered. Basic and acidic residues predominate over residues Q7–R27. In terms of domain architecture, HD spans R59–A255.

This sequence belongs to the dGTPase family. Type 2 subfamily.

The polypeptide is Deoxyguanosinetriphosphate triphosphohydrolase-like protein (Shewanella baltica (strain OS185)).